A 258-amino-acid chain; its full sequence is Tryptophan synthase alpha chain (258 aa).

Residues glutamate 47 and aspartate 58 each act as proton acceptor in the active site.

Belongs to the TrpA family. In terms of assembly, tetramer of two alpha and two beta chains.

The catalysed reaction is (1S,2R)-1-C-(indol-3-yl)glycerol 3-phosphate + L-serine = D-glyceraldehyde 3-phosphate + L-tryptophan + H2O. Its pathway is amino-acid biosynthesis; L-tryptophan biosynthesis; L-tryptophan from chorismate: step 5/5. Its function is as follows. The alpha subunit is responsible for the aldol cleavage of indoleglycerol phosphate to indole and glyceraldehyde 3-phosphate. This Bacillus cereus (strain ATCC 10987 / NRS 248) protein is Tryptophan synthase alpha chain.